We begin with the raw amino-acid sequence, 25 residues long: GRSLVFPEETANSFVELFPAKELSL.

In terms of domain architecture, Pentraxin (PTX) spans 1 to 25 (GRSLVFPEETANSFVELFPAKELSL).

Belongs to the pentraxin family. Heteropentamer. Discoid arrangement of 5 non-covalently bound subunits 1, 2, 3 and 4. Ca(2+) serves as cofactor. Glycosylated.

The protein resides in the secreted. Its function is as follows. Displays several functions associated with host defense: it promotes agglutination, bacterial capsular swelling, phagocytosis, and complement fixation through its calcium-dependent binding to phosphorylcholine. The protein is C-reactive protein P2 subunit 4 of Gadus morhua (Atlantic cod).